The sequence spans 648 residues: Spike protein P3 (648 aa).

Interacts with P6.

It localises to the virion membrane. In terms of biological role, P3 protein is necessary for adsorption onto host cells. Attaches to a type IV pilus of the host. The sequence is that of Spike protein P3 (P3) from Pseudomonas savastanoi pv. phaseolicola (Pseudomonas syringae pv. phaseolicola).